The sequence spans 210 residues: Glutathione S-transferase P (210 aa).

Residues 2 to 81 form the GST N-terminal domain; it reads ASYTIVYFPV…HLGRTLGLYG (80 aa). Tyrosine 4 carries the post-translational modification Phosphotyrosine; by EGFR. Glutathione is bound by residues tyrosine 8, arginine 14, tryptophan 39, lysine 45, and 52 to 53; that span reads QL. Phosphothreonine is present on threonine 62. 65–66 serves as a coordination point for glutathione; the sequence is QS. Residues 83–204 form the GST C-terminal domain; it reads DQREAALVDM…ASPEHVNRPI (122 aa). Residues lysine 103 and lysine 116 each carry the N6-succinyllysine modification. Position 128 is an N6-acetyllysine (lysine 128).

Belongs to the GST superfamily. Pi family. In terms of assembly, homodimer. Interacts with CDK5.

It localises to the cytoplasm. The protein localises to the mitochondrion. It is found in the nucleus. The catalysed reaction is RX + glutathione = an S-substituted glutathione + a halide anion + H(+). The enzyme catalyses prostaglandin J2 + glutathione = prostaglandin J2-S-(R)-glutathione. It catalyses the reaction prostaglandin J2 + glutathione = prostaglandin J2-S-(S)-glutathione. It carries out the reaction prostaglandin A2 + glutathione = prostaglandin A2-S-(S)-glutathione. The catalysed reaction is 11(S)-hydroxy-14(S),15(S)-epoxy-(5Z,8Z,12E)-eicosatrienoate + glutathione = (11S,15S)-dihydroxy-14(R)-S-glutathionyl-(5Z,8Z,12E)-eicosatrienoate. Its function is as follows. Conjugation of reduced glutathione to a wide number of exogenous and endogenous hydrophobic electrophiles. Involved in the formation of glutathione conjugates of both prostaglandin A2 (PGA2) and prostaglandin J2 (PGJ2). Participates in the formation of novel hepoxilin regioisomers. Negatively regulates CDK5 activity via p25/p35 translocation to prevent neurodegeneration. The chain is Glutathione S-transferase P (GSTP1) from Capra hircus (Goat).